We begin with the raw amino-acid sequence, 405 residues long: Cystathionine gamma-lyase (405 aa).

The substrate site is built by Arg62, Tyr114, and Arg119. Lys212 is modified (N6-(pyridoxal phosphate)lysine). Glu339 is a binding site for substrate.

Belongs to the trans-sulfuration enzymes family. As to quaternary structure, homotetramer. Interacts with CALM in a calcium-dependent manner. Requires pyridoxal 5'-phosphate as cofactor. In terms of tissue distribution, highly expressed in liver. Also in muscle and lower expression in most tissues except heart, pituitary gland, spleen, thymus, and vascular tissue, where it is hardly detected.

The protein localises to the cytoplasm. The catalysed reaction is L,L-cystathionine + H2O = 2-oxobutanoate + L-cysteine + NH4(+). It catalyses the reaction L-cysteine + H2O = hydrogen sulfide + pyruvate + NH4(+) + H(+). The enzyme catalyses L-homocysteine + H2O = 2-oxobutanoate + hydrogen sulfide + NH4(+) + H(+). It carries out the reaction L-homoserine = 2-oxobutanoate + NH4(+). The catalysed reaction is L-selenocystathionine + H2O = L-selenocysteine + 2-oxobutanoate + NH4(+). The protein operates within amino-acid biosynthesis; L-cysteine biosynthesis; L-cysteine from L-homocysteine and L-serine: step 2/2. Inhibited by propargylglycine, trifluoroalanine and aminoethoxyvinylglycine. Its function is as follows. Catalyzes the last step in the trans-sulfuration pathway from L-methionine to L-cysteine in a pyridoxal-5'-phosphate (PLP)-dependent manner, which consists on cleaving the L,L-cystathionine molecule into L-cysteine, ammonia and 2-oxobutanoate. Part of the L-cysteine derived from the trans-sulfuration pathway is utilized for biosynthesis of the ubiquitous antioxidant glutathione. Besides its role in the conversion of L-cystathionine into L-cysteine, it utilizes L-cysteine and L-homocysteine as substrates (at much lower rates than L,L-cystathionine) to produce the endogenous gaseous signaling molecule hydrogen sulfide (H2S). In vitro, it converts two L-cysteine molecules into lanthionine and H2S, also two L-homocysteine molecules to homolanthionine and H2S, which can be particularly relevant under conditions of severe hyperhomocysteinemia (which is a risk factor for cardiovascular disease, diabetes, and Alzheimer's disease). Lanthionine and homolanthionine are structural homologs of L,L-cystathionine that differ by the absence or presence of an extra methylene group, respectively. Acts as a cysteine-protein sulfhydrase by mediating sulfhydration of target proteins: sulfhydration consists of converting -SH groups into -SSH on specific cysteine residues of target proteins such as GAPDH, PTPN1 and NF-kappa-B subunit RELA, thereby regulating their function. By generating the gasotransmitter H2S, it participates in a number of physiological processes such as vasodilation, bone protection, and inflammation. Plays an essential role in myogenesis by contributing to the biogenesis of H2S in skeletal muscle tissue. Can also accept homoserine as substrate. Catalyzes the elimination of selenocystathionine (which can be derived from the diet) to yield selenocysteine, ammonia and 2-oxobutanoate. The protein is Cystathionine gamma-lyase (CTH) of Homo sapiens (Human).